Here is a 500-residue protein sequence, read N- to C-terminus: Glutamate--tRNA ligase (500 aa).

A 'HIGH' region motif is present at residues 12-22; that stretch reads PSPTGHLHIGN. The short motif at 259-263 is the 'KMSKS' region element; the sequence is KLSKR. Lys-262 contacts ATP.

Belongs to the class-I aminoacyl-tRNA synthetase family. Glutamate--tRNA ligase type 1 subfamily. Monomer.

Its subcellular location is the cytoplasm. The catalysed reaction is tRNA(Glu) + L-glutamate + ATP = L-glutamyl-tRNA(Glu) + AMP + diphosphate. Functionally, catalyzes the attachment of glutamate to tRNA(Glu) in a two-step reaction: glutamate is first activated by ATP to form Glu-AMP and then transferred to the acceptor end of tRNA(Glu). This Lactobacillus delbrueckii subsp. bulgaricus (strain ATCC 11842 / DSM 20081 / BCRC 10696 / JCM 1002 / NBRC 13953 / NCIMB 11778 / NCTC 12712 / WDCM 00102 / Lb 14) protein is Glutamate--tRNA ligase.